Consider the following 231-residue polypeptide: 5'-methylthioadenosine/S-adenosylhomocysteine nucleosidase (231 aa).

The active-site Proton acceptor is E12. Substrate contacts are provided by residues G78, V153, and 174–175 (ME). D198 functions as the Proton donor in the catalytic mechanism.

This sequence belongs to the PNP/UDP phosphorylase family. MtnN subfamily.

It carries out the reaction S-adenosyl-L-homocysteine + H2O = S-(5-deoxy-D-ribos-5-yl)-L-homocysteine + adenine. It catalyses the reaction S-methyl-5'-thioadenosine + H2O = 5-(methylsulfanyl)-D-ribose + adenine. The enzyme catalyses 5'-deoxyadenosine + H2O = 5-deoxy-D-ribose + adenine. It participates in amino-acid biosynthesis; L-methionine biosynthesis via salvage pathway; S-methyl-5-thio-alpha-D-ribose 1-phosphate from S-methyl-5'-thioadenosine (hydrolase route): step 1/2. In terms of biological role, catalyzes the irreversible cleavage of the glycosidic bond in both 5'-methylthioadenosine (MTA) and S-adenosylhomocysteine (SAH/AdoHcy) to adenine and the corresponding thioribose, 5'-methylthioribose and S-ribosylhomocysteine, respectively. Also cleaves 5'-deoxyadenosine, a toxic by-product of radical S-adenosylmethionine (SAM) enzymes, into 5-deoxyribose and adenine. The chain is 5'-methylthioadenosine/S-adenosylhomocysteine nucleosidase from Aliivibrio salmonicida (strain LFI1238) (Vibrio salmonicida (strain LFI1238)).